The chain runs to 114 residues: Nucleoid-associated protein NT01CX_0824 (114 aa).

This sequence belongs to the YbaB/EbfC family. In terms of assembly, homodimer.

It is found in the cytoplasm. The protein resides in the nucleoid. Binds to DNA and alters its conformation. May be involved in regulation of gene expression, nucleoid organization and DNA protection. The protein is Nucleoid-associated protein NT01CX_0824 of Clostridium novyi (strain NT).